Reading from the N-terminus, the 371-residue chain is Putative glutamate--cysteine ligase 2 (371 aa).

Belongs to the glutamate--cysteine ligase type 2 family. YbdK subfamily. Homodimer.

It carries out the reaction L-cysteine + L-glutamate + ATP = gamma-L-glutamyl-L-cysteine + ADP + phosphate + H(+). ATP-dependent carboxylate-amine ligase which exhibits weak glutamate--cysteine ligase activity. The protein is Putative glutamate--cysteine ligase 2 of Klebsiella pneumoniae (strain 342).